The following is a 134-amino-acid chain: MQSAKQKISDMASTAKEKMVICQAKADEKAERAMARTKEEKEIAHQRRKAKEAEANMDMHMAKAAHAEDKLMAKQSHYHVTDHGPHVPQQAPVPAPAPVMGHGYGHNPTGVTSVPPQTYHPTYPPTGHHNHHHY.

The segment covering 31–45 (ERAMARTKEEKEIAH) has biased composition (basic and acidic residues). Disordered regions lie at residues 31 to 53 (ERAM…AKEA) and 80 to 134 (VTDH…HHHY). Residues 34 to 70 (MARTKEEKEIAHQRRKAKEAEANMDMHMAKAAHAEDK) are a coiled coil. Positions 115–127 (PPQTYHPTYPPTG) are enriched in low complexity.

This sequence belongs to the LEA type 1 family.

Involved dehydration tolerance. Involved in the adaptive response of vascular plants to withstand water deficit. May possess chaperone-like activity under water deficit. In Arabidopsis thaliana (Mouse-ear cress), this protein is Late embryogenesis abundant protein 6.